Consider the following 447-residue polypeptide: Protein disulfide-isomerase like 2-2 (447 aa).

A signal peptide spans 1–26 (MERKMYKSTVFPICCLLFALFDRGNA). Thioredoxin domains are found at residues 27–139 (LYGS…QIKA) and 161–275 (KKKS…QLES). Residues C62 and C65 each act as nucleophile in the active site. A disulfide bridge links C62 with C65. The interval 146 to 170 (DGKTSGTKNGGGSSEKKKSEPSASV) is disordered. Residue N173 is glycosylated (N-linked (GlcNAc...) asparagine). Active-site nucleophile residues include C197 and C200. Cysteines 197 and 200 form a disulfide. The short motif at 444 to 447 (KDDL) is the Prevents secretion from ER element.

Belongs to the protein disulfide isomerase family. As to expression, widely expressed.

The protein resides in the endoplasmic reticulum lumen. The enzyme catalyses Catalyzes the rearrangement of -S-S- bonds in proteins.. In terms of biological role, acts as a protein-folding catalyst that interacts with nascent polypeptides to catalyze the formation, isomerization, and reduction or oxidation of disulfide bonds. This is Protein disulfide-isomerase like 2-2 (PDIL2-2) from Arabidopsis thaliana (Mouse-ear cress).